The primary structure comprises 757 residues: 5-methyltetrahydropteroyltriglutamate--homocysteine methyltransferase (757 aa).

5-methyltetrahydropteroyltri-L-glutamate contacts are provided by residues 16-19 and lysine 112; that span reads RELK. Residues 433–435 and glutamate 486 each bind L-homocysteine; that span reads IGS. L-methionine contacts are provided by residues 433–435 and glutamate 486; that span reads IGS. 5-methyltetrahydropteroyltri-L-glutamate-binding positions include 517 to 518 and tryptophan 563; that span reads RC. Position 601 (aspartate 601) interacts with L-homocysteine. Aspartate 601 serves as a coordination point for L-methionine. Residue glutamate 607 participates in 5-methyltetrahydropteroyltri-L-glutamate binding. Zn(2+)-binding residues include histidine 643, cysteine 645, and glutamate 667. Histidine 696 (proton donor) is an active-site residue. Cysteine 728 is a Zn(2+) binding site.

Belongs to the vitamin-B12 independent methionine synthase family. Requires Zn(2+) as cofactor.

It carries out the reaction 5-methyltetrahydropteroyltri-L-glutamate + L-homocysteine = tetrahydropteroyltri-L-glutamate + L-methionine. It functions in the pathway amino-acid biosynthesis; L-methionine biosynthesis via de novo pathway; L-methionine from L-homocysteine (MetE route): step 1/1. Catalyzes the transfer of a methyl group from 5-methyltetrahydrofolate to homocysteine resulting in methionine formation. The polypeptide is 5-methyltetrahydropteroyltriglutamate--homocysteine methyltransferase (Pasteurella multocida (strain Pm70)).